Reading from the N-terminus, the 109-residue chain is Nucleoid-associated protein CKO_02678 (109 aa).

Residues 89-109 (KEKMASVSSGMQLPPGFKMPF) form a disordered region.

It belongs to the YbaB/EbfC family. Homodimer.

It localises to the cytoplasm. The protein localises to the nucleoid. Functionally, binds to DNA and alters its conformation. May be involved in regulation of gene expression, nucleoid organization and DNA protection. In Citrobacter koseri (strain ATCC BAA-895 / CDC 4225-83 / SGSC4696), this protein is Nucleoid-associated protein CKO_02678.